The following is a 591-amino-acid chain: uncharacterized protein (591 aa).

The next 4 membrane-spanning stretches (helical) occupy residues 389-409, 411-431, 538-558, and 571-591; these read VYLGSYFAGASGLVIAGSALI, GGSPWFGLGLAGVGILAGGIL, GILPEWALWLITIVIGLFALS, and PIISIIVVIAILYALTYFNLL.

The protein localises to the membrane. This is an uncharacterized protein from Mycoplasma (Bacteriophage L2).